A 60-amino-acid chain; its full sequence is Large ribosomal subunit protein bL32 (60 aa).

Positions 1 to 23 (MAKHPVPKKKTSKARRDARRSHH) are enriched in basic residues. Residues 1–28 (MAKHPVPKKKTSKARRDARRSHHALTPP) are disordered.

The protein belongs to the bacterial ribosomal protein bL32 family. In terms of assembly, part of the 50S ribosomal subunit.

In terms of biological role, found on the solvent side of the large subunit. The protein is Large ribosomal subunit protein bL32 (rpmF) of Thermus thermophilus (strain ATCC BAA-163 / DSM 7039 / HB27).